The chain runs to 516 residues: GTPase Obg (516 aa).

The Obg domain maps to proline 4 to valine 161. One can recognise an OBG-type G domain in the interval alanine 162–glutamate 332. GTP contacts are provided by residues glycine 168–serine 175, phenylalanine 193–valine 197, aspartate 214–glycine 217, asparagine 284–aspartate 287, and serine 313–alanine 315. Serine 175 and threonine 195 together coordinate Mg(2+). One can recognise an OCT domain in the interval proline 351–proline 432. Over residues alanine 466–glycine 491 the composition is skewed to basic and acidic residues. The segment at alanine 466–glutamate 516 is disordered.

This sequence belongs to the TRAFAC class OBG-HflX-like GTPase superfamily. OBG GTPase family. Monomer. Requires Mg(2+) as cofactor.

It localises to the cytoplasm. An essential GTPase which binds GTP, GDP and possibly (p)ppGpp with moderate affinity, with high nucleotide exchange rates and a fairly low GTP hydrolysis rate. Plays a role in control of the cell cycle, stress response, ribosome biogenesis and in those bacteria that undergo differentiation, in morphogenesis control. This Nocardioides sp. (strain ATCC BAA-499 / JS614) protein is GTPase Obg.